The primary structure comprises 361 residues: Peptide chain release factor 1 (361 aa).

Glutamine 236 is modified (N5-methylglutamine). Basic and acidic residues predominate over residues threonine 285–arginine 309. The tract at residues threonine 285–phenylalanine 313 is disordered.

This sequence belongs to the prokaryotic/mitochondrial release factor family. In terms of processing, methylated by PrmC. Methylation increases the termination efficiency of RF1.

The protein resides in the cytoplasm. In terms of biological role, peptide chain release factor 1 directs the termination of translation in response to the peptide chain termination codons UAG and UAA. The polypeptide is Peptide chain release factor 1 (Methylorubrum populi (strain ATCC BAA-705 / NCIMB 13946 / BJ001) (Methylobacterium populi)).